Here is a 394-residue protein sequence, read N- to C-terminus: Elongation factor Tu (394 aa).

The tr-type G domain maps to 10-204 (KPHINVGTIG…FLDTYIPEPK (195 aa)). Positions 19-26 (GHVDHGKT) are G1. 19–26 (GHVDHGKT) provides a ligand contact to GTP. Thr26 is a Mg(2+) binding site. Positions 60-64 (GITIN) are G2. The tract at residues 81–84 (DCPG) is G3. Residues 81 to 85 (DCPGH) and 136 to 139 (NKCD) each bind GTP. Residues 136–139 (NKCD) form a G4 region. The interval 174-176 (SAL) is G5.

It belongs to the TRAFAC class translation factor GTPase superfamily. Classic translation factor GTPase family. EF-Tu/EF-1A subfamily. Monomer.

The protein localises to the cytoplasm. It carries out the reaction GTP + H2O = GDP + phosphate + H(+). GTP hydrolase that promotes the GTP-dependent binding of aminoacyl-tRNA to the A-site of ribosomes during protein biosynthesis. In Buchnera aphidicola subsp. Schizaphis graminum (strain Sg), this protein is Elongation factor Tu.